Reading from the N-terminus, the 60-residue chain is Small ribosomal subunit protein eS31 (60 aa).

Residues Cys-32, Cys-35, Cys-50, and Cys-53 each coordinate Zn(2+). A C4-type zinc finger spans residues 32–53 (CPRCGAGVFMGEHKDRFSCGKC).

It belongs to the eukaryotic ribosomal protein eS31 family. In terms of assembly, part of the 30S ribosomal subunit. Zn(2+) serves as cofactor.

The sequence is that of Small ribosomal subunit protein eS31 from Methanocorpusculum labreanum (strain ATCC 43576 / DSM 4855 / Z).